The primary structure comprises 545 residues: CTP synthase (545 aa).

Residues Met1 to Ile266 are amidoligase domain. Ser14 provides a ligand contact to CTP. Ser14 serves as a coordination point for UTP. Residues Ser15–Ile20 and Asp72 contribute to the ATP site. 2 residues coordinate Mg(2+): Asp72 and Glu140. CTP-binding positions include Asp147 to Glu149, Lys187 to Gln192, and Lys223. UTP contacts are provided by residues Lys187–Gln192 and Lys223. An ATP-binding site is contributed by Lys239–Val241. The 252-residue stretch at Thr291 to Gly542 folds into the Glutamine amidotransferase type-1 domain. An L-glutamine-binding site is contributed by Gly352. The active-site Nucleophile; for glutamine hydrolysis is the Cys379. L-glutamine is bound by residues Leu380–Gln383, Glu403, and Arg470. Residues His515 and Glu517 contribute to the active site.

It belongs to the CTP synthase family. As to quaternary structure, homotetramer.

It carries out the reaction UTP + L-glutamine + ATP + H2O = CTP + L-glutamate + ADP + phosphate + 2 H(+). The enzyme catalyses L-glutamine + H2O = L-glutamate + NH4(+). The catalysed reaction is UTP + NH4(+) + ATP = CTP + ADP + phosphate + 2 H(+). Its pathway is pyrimidine metabolism; CTP biosynthesis via de novo pathway; CTP from UDP: step 2/2. Its activity is regulated as follows. Allosterically activated by GTP, when glutamine is the substrate; GTP has no effect on the reaction when ammonia is the substrate. The allosteric effector GTP functions by stabilizing the protein conformation that binds the tetrahedral intermediate(s) formed during glutamine hydrolysis. Inhibited by the product CTP, via allosteric rather than competitive inhibition. Catalyzes the ATP-dependent amination of UTP to CTP with either L-glutamine or ammonia as the source of nitrogen. Regulates intracellular CTP levels through interactions with the four ribonucleotide triphosphates. This chain is CTP synthase, found in Vibrio vulnificus (strain CMCP6).